Reading from the N-terminus, the 427-residue chain is Adenylosuccinate synthetase (427 aa).

Residues 12–18 (GDEGKGK) and 40–42 (GHT) contribute to the GTP site. The active-site Proton acceptor is Asp-13. Mg(2+)-binding residues include Asp-13 and Gly-40. IMP contacts are provided by residues 13–16 (DEGK), 38–41 (NAGH), Thr-128, Arg-142, Gln-223, Thr-238, and Arg-302. Catalysis depends on His-41, which acts as the Proton donor. 298 to 304 (TTTGRPR) contributes to the substrate binding site. GTP is bound by residues Arg-304, 330-332 (KLD), and 412-414 (SVG).

This sequence belongs to the adenylosuccinate synthetase family. In terms of assembly, homodimer. Mg(2+) is required as a cofactor.

The protein resides in the cytoplasm. It carries out the reaction IMP + L-aspartate + GTP = N(6)-(1,2-dicarboxyethyl)-AMP + GDP + phosphate + 2 H(+). It functions in the pathway purine metabolism; AMP biosynthesis via de novo pathway; AMP from IMP: step 1/2. In terms of biological role, plays an important role in the de novo pathway of purine nucleotide biosynthesis. Catalyzes the first committed step in the biosynthesis of AMP from IMP. This is Adenylosuccinate synthetase from Carboxydothermus hydrogenoformans (strain ATCC BAA-161 / DSM 6008 / Z-2901).